We begin with the raw amino-acid sequence, 109 residues long: uncharacterized protein (109 aa).

Residues 90–107 traverse the membrane as a helical segment; it reads IICNFWGSLLGVGIAFYQ.

The protein resides in the membrane. This is an uncharacterized protein from Saccharomyces cerevisiae (strain ATCC 204508 / S288c) (Baker's yeast).